The primary structure comprises 153 residues: MAPKKDEKPATAEAGAEAPAKAEAKPKAEKAAKKAKKEPSKKAAKEPKGDGEKKDKKKKKSAVETYKLYIYKVLKQVHPDTGISSKAMSIMNSFINDIFEKVATEASKLSRYNKKPTVTSREIQTAVRLVLPGELAKHAVSEGTKAVTKFTSG.

Composition is skewed to basic and acidic residues over residues 1 to 10 and 20 to 54; these read MAPKKDEKPA and AKAEAKPKAEKAAKKAKKEPSKKAAKEPKGDGEKK. A disordered region spans residues 1–60; the sequence is MAPKKDEKPATAEAGAEAPAKAEAKPKAEKAAKKAKKEPSKKAAKEPKGDGEKKDKKKKK. Lysine 41 and lysine 42 each carry N6-acetyllysine. A Glycyl lysine isopeptide (Lys-Gly) (interchain with G-Cter in ubiquitin) cross-link involves residue lysine 149.

The protein belongs to the histone H2B family. As to quaternary structure, the nucleosome is a histone octamer containing two molecules each of H2A, H2B, H3 and H4 assembled in one H3-H4 heterotetramer and two H2A-H2B heterodimers. The octamer wraps approximately 147 bp of DNA. The N-terminus is blocked. Post-translationally, can be acetylated to form H2BK33ac and H2BK34ac. Acetylated mainly on the ubiquitinated form. In terms of processing, monoubiquitinated to form H2BK143ub1; which is increased during the light period and may give a specific tag for epigenetic transcriptional activation.

It localises to the nucleus. It is found in the chromosome. Functionally, core component of nucleosome. Nucleosomes wrap and compact DNA into chromatin, limiting DNA accessibility to the cellular machineries which require DNA as a template. Histones thereby play a central role in transcription regulation, DNA repair, DNA replication and chromosomal stability. DNA accessibility is regulated via a complex set of post-translational modifications of histones, also called histone code, and nucleosome remodeling. This is Histone H2B.4 from Chlamydomonas reinhardtii (Chlamydomonas smithii).